A 248-amino-acid polypeptide reads, in one-letter code: Pulmonary surfactant-associated protein A (248 aa).

Positions 1-17 (MWLRCLALALTLLMVSG) are cleaved as a signal peptide. The N-linked (GlcNAc...) asparagine glycan is linked to asparagine 20. Positions 28 to 100 (GNPGIPGTPG…PGERGPPGLP (73 aa)) constitute a Collagen-like domain. Residues 29–103 (NPGIPGTPGS…RGPPGLPASL (75 aa)) form a disordered region. Residues proline 30, proline 33, proline 36, proline 42, proline 54, proline 57, proline 63, proline 67, and proline 70 each carry the 4-hydroxyproline modification. A compositionally biased stretch (basic and acidic residues) spans 42–51 (PGRDGRDGVK). Positions 54 to 65 (PGPPGPLGPPGG) are enriched in pro residues. The segment covering 84–93 (ERGEKGEPGE) has biased composition (basic and acidic residues). Residues 132 to 248 (LVVGRKVFSS…LQYRLAICEF (117 aa)) form the C-type lectin domain. 2 disulfides stabilise this stretch: cysteine 155-cysteine 246 and cysteine 224-cysteine 238. A glycan (N-linked (GlcNAc...) asparagine) is linked at asparagine 207. Residues glutamate 215, arginine 217, and asparagine 234 each coordinate Ca(2+).

It belongs to the SFTPA family. Oligomeric complex of 6 set of homotrimers.

It localises to the secreted. The protein resides in the extracellular space. It is found in the extracellular matrix. The protein localises to the surface film. In terms of biological role, in presence of calcium ions, it binds to surfactant phospholipids and contributes to lower the surface tension at the air-liquid interface in the alveoli of the mammalian lung and is essential for normal respiration. Enhances the expression of MYO18A/SP-R210 on alveolar macrophages. The polypeptide is Pulmonary surfactant-associated protein A (SFTPA1) (Canis lupus familiaris (Dog)).